Reading from the N-terminus, the 216-residue chain is Transmembrane protein 163a (216 aa).

At 1–15 the chain is on the cytoplasmic side; it reads MRLKPHEAQSYRKKA. The helical transmembrane segment at 16–36 threads the bilayer; sequence LWVSWISIVVTLILAVAGFTV. Residues 37–43 lie on the Extracellular side of the membrane; that stretch reads SFMRHSA. A helical membrane pass occupies residues 44-64; the sequence is SAFGFAFDATLDVLSSIIVLW. The Cytoplasmic portion of the chain corresponds to 65 to 77; it reads RYSNAAAVHSAHR. The helical transmembrane segment at 78 to 98 threads the bilayer; that stretch reads EYIACVILGVIFILSSLCILG. The Extracellular portion of the chain corresponds to 99 to 114; the sequence is KAIHDLATKLLPEVDD. A helical membrane pass occupies residues 115–135; that stretch reads FLFSVSIVSGLMCVILAVAKF. At 136–144 the chain is on the cytoplasmic side; the sequence is MLGRILTSR. A helical transmembrane segment spans residues 145 to 165; the sequence is ALITDGFNSMVGGIMGFSILI. Over 166-182 the chain is Extracellular; that stretch reads SAEVFRHYPNVWYLDGT. Residues 183–203 form a helical membrane-spanning segment; sequence IGILIGLVIQAYGVKLLVDMI. The Cytoplasmic portion of the chain corresponds to 204–216; that stretch reads PRVRQTRNYERFE.

Belongs to the TMEM163 family.

Its subcellular location is the cytoplasmic vesicle. It is found in the secretory vesicle. The protein resides in the synaptic vesicle membrane. The protein localises to the early endosome membrane. It localises to the late endosome membrane. Its subcellular location is the lysosome membrane. It is found in the cell membrane. It carries out the reaction Zn(2+)(in) = Zn(2+)(out). Functionally, zinc ion transporter that mediates zinc efflux and plays a crucial role in intracellular zinc homeostasis. Binds the divalent cations Zn(2+), Ni(2+), and to a minor extent Cu(2+). Is a functional modulator of P2X purinoceptors, including P2RX1, P2RX3, P2RX4 and P2RX7. Plays a role in central nervous system development and is required for myelination, and survival and proliferation of oligodendrocytes. The polypeptide is Transmembrane protein 163a (Danio rerio (Zebrafish)).